Consider the following 925-residue polypeptide: Antiviral innate immune response receptor RIG-I (925 aa).

2 consecutive CARD domains span residues 1 to 87 (MTTE…GLYE) and 92 to 172 (WDFK…KTLK). At S8 the chain carries (Microbial infection) Phosphoserine. S8 is modified (phosphoserine). Residues K48, K96, K154, and K164 each participate in a glycyl lysine isopeptide (Lys-Gly) (interchain with G-Cter in ubiquitin) cross-link. At T170 the chain carries Phosphothreonine. Residues K172, K181, K193, and K203 each participate in a glycyl lysine isopeptide (Lys-Gly) (interchain with G-Cter in ubiquitin) cross-link. The segment at 218-925 (ECQNLSENSC…IPFDPAEMSK (708 aa)) is interaction with ZC3HAV1. The 180-residue stretch at 251-430 (ALPAMKGKNT…DEALDYICKL (180 aa)) folds into the Helicase ATP-binding domain. ATP is bound at residue 264-271 (APTGCGKT). The short motif at 372-375 (DECH) is the DECH box element. (Microbial infection) Deamidated asparagine; by herpes simplex virus 1/HHV-1 UL37 occurs at positions 495 and 549. The 167-residue stretch at 610 to 776 (KLEDLCFILQ…RLQTWDEAVF (167 aa)) folds into the Helicase C-terminal domain. Positions 735–925 (GSKCFLLTSN…IPFDPAEMSK (191 aa)) are mediates interaction with RNF135. Residue T770 is modified to Phosphothreonine; by CK2. The region spanning 794–925 (QEKPKPVPDK…IPFDPAEMSK (132 aa)) is the RLR CTR domain. C810 serves as a coordination point for Zn(2+). Residue K812 forms a Glycyl lysine isopeptide (Lys-Gly) (interchain with G-Cter in ubiquitin) linkage. A Zn(2+)-binding site is contributed by C813. S854 and S855 each carry phosphoserine; by CK2. K858 carries the post-translational modification N6-acetyllysine. Zn(2+) is bound by residues C864 and C869. At K909 the chain carries N6-acetyllysine.

Belongs to the helicase family. RLR subfamily. As to quaternary structure, monomer; maintained as a monomer in an autoinhibited state. Upon binding of viral RNAs and conformational shift, homooligomerizes and forms filaments on these molecules. Interacts (via tandem CARD domain) with MAVS/IPS1 promoting its filamentation. Interacts with DHX58/LGP2, IKBKE, TBK1 and STING1. Interacts (via CARD domain) with TRIM25 (via SPRY domain). Interacts (double-stranded RNA-bound oligomeric form) with RNF135 (homodimer); involved in RNA length-dependent activation of the RIG-I signaling pathway. Interacts with CYLD. Interacts with NLRC5; blocks the interaction of MAVS/IPS1 to RIGI. Interacts with SRC. Interacts with DDX60. Interacts with isoform 2 of ZC3HAV1 (via zinc-fingers) in an RNA-dependent manner. Interacts (via tandem CARD domain) with SEC14L1; the interaction is direct and impairs the interaction of RIGI with MAVS/IPS1. Interacts with VCP/p97; interaction is direct and allows the recruitment of RNF125 and subsequent ubiquitination and degradation. Interacts with NOP53; may regulate RIGI through USP15-mediated 'Lys-63'-linked deubiquitination. Interacts with SIGLEC10, CBL and PTPN11; within a negative feedback loop leading to RIGI degradation. Interacts with LRRC25. Interacts with ZCCHC3; leading to activation of RIGI. Interacts with RNF123. Interacts with UBE2D3 and UBE2N; E2 ubiquitin ligases involved in RNF135-mediated ubiquitination of RIGI and activation of the RIG-I signaling pathway. Interacts with IFIT3. Interacts with DDX3X. Interacts with RTN3. Interacts with ARL16; this interaction is GTP-dependent and induced upon viral infection; this interaction suppresses the RNA sensing activity of RIGI. Interacts with DHX16; this interaction enhances RIGI-mediated antiviral response. Interacts with IRGM; promoting RIGI degradation. Interacts with IFI6; this interaction inhibits RIGI activation. Interacts with ECSIT; this interaction bridges RIGI to the MAVS complex at the mitochondrion. Interacts with YWHAE; this interaction drives RIGI at the mitochondrion. (Microbial infection) Interacts with protein Z of Guanarito virus, Machupo virus, Junin arenavirus and Sabia virus. This interaction disrupts its interaction with MAVS/IPS1, impeding downstream IRF3 and NF-kappa-B activation and resulting in decreased IFN-beta induction. In terms of assembly, (Microbial infection) Interacts (via CARD domain) with Human respiratory syncytial virus A non-structural protein 2 (NS2) and this interaction disrupts its interaction with MAVS/IPS1, impeding downstream IRF3 activation. As to quaternary structure, (Microbial infection) Interacts with Rotavirus A non-structural protein 1 (NSP1) and this interaction induces down-regulation of RIGI. (Microbial infection) Interacts with paramyxoviruses (Sendai virus, Nipah virus, Measles virus and Parainfluenza virus 5) protein V; this interaction inhibits TRIM25-mediated ubiquitination of RIG-I and prevents downstream RIG-I signaling thereby inhibiting the IFN responses. In terms of assembly, (Microbial infection) Interacts with herpes simplex virus 1 protein US11; this interaction prevents the interaction of MAVS/IPS1 to RIGI. As to quaternary structure, (Microbial infection) Interacts with herpes simplex virus 1 protein UL37; this interaction deaminates RIGI and inhibits its activation. (Microbial infection) Interacts with Severe fever with thrombocytopenia virus (SFTSV) NSs; this interaction this interaction sequesters RIGI in NSs-induced cytoplasmic inclusion bodies thereby inhibiting the IFN responses. Post-translationally, phosphorylated in resting cells and dephosphorylated in RNA virus-infected cells. Phosphorylation at Thr-770, Ser-854 and Ser-855 results in inhibition of its activity while dephosphorylation at these sites results in its activation. In terms of processing, ubiquitinated. 'Lys-63' ubiquitination by RNF135, which occurs after RNA-binding and homodimerization, releases the autoinhibition of the CARD domains by the RLR CTR domain, an essential step in the activation of the RIG-I signaling pathway. Lys-172 is the critical site of ubiquitination for MAVS/IPS1 binding and to induce anti-viral signal transduction. Lys-154, Lys-164 and Lys-172 are shared sites for RNF135-mediated and TRIM4-mediated ubiquitination. Also undergoes 'Lys-48' ubiquitination at Lys-181 by RNF125 that leads to proteasomal degradation. 'Lys-48' ubiquitination follows viral infection and is enhanced by 'Lys-63'-linked ubiquitination of the CARD domains that promotes interaction with VCP/p97 and subsequent recruitment of RNF125. Within a negative feedback loop involving SIGLEC10 and PTPN11, 'Lys-48' ubiquitination at Lys-812 by CBL also elicits the proteasomal degradation of RIGI. Deubiquitinated by CYLD, a protease that selectively cleaves 'Lys-63'-linked ubiquitin chains. Also probably deubiquitinated by USP17L2/USP17 that cleaves 'Lys-48'- and 'Lys-63'-linked ubiquitin chains and positively regulates the receptor. Ubiquitinated by TRIM40 via 'Lys-48'-linked ubiquitination; leading to proteasomal degradation. Deubiquitinated by USP27X that cleaves 'Lys-63'-linked ubiquitin chains and inhibits the innate immune receptor activity. Deubiquitinated by USP3 that also cleaves 'Lys-63'-linked ubiquitin chains and inhibits the innate immune receptor activity. Undergoes 'Lys-48'-linked ubiquitination catalyzed by MARCHF5 at Lys-193 and Lys-203, leading to proteasomal degradation. Phosphorylated at Ser-8 and Thr-170; these phosphorylations suppresse the TRIM25-mediated 'Lys-63'-linked ubiquitination of RIG-I and thereby prevents RIG-I downstream signaling. Dephosphorylated by phosphatases PPP1CA/PPP1CC; this step is essential to activate RIGI and initiate downstream signaling. Post-translationally, ISGylated. Conjugated to ubiquitin-like protein ISG15 upon IFN-beta stimulation. ISGylation negatively regulates its function in antiviral signaling response. In terms of processing, sumoylated, probably by MUL1; inhibiting its polyubiquitination. Acetylated in response to RNA virus infection. Deacetylated by HDAC6 in the presence of viral mRNAs which is required for detection of viral RNA by RIGI. Post-translationally, (Microbial infection) Deamidated on Asn-495 and Asn-549 by herpes simplex virus 1 protein UL37. These modifications eliminate RIGI detection of viral RNA and restriction of viral replication. In terms of processing, degraded via selective autophagy following interaction with IRGM. IRGM promotes RIGI recruitment to autophagosome membranes, promoting its SQSTM1/p62-dependent autophagic degradation. (Microbial infection) Cleaved by the protease 3C of coxsackievirus B3, poliovirus and enterovirus 71 allowing the virus to disrupt the host type I interferon production. Post-translationally, (Microbial infection) Phosphorylated at Ser-8 by herpes simplex virus 1 protein US3 leading to inhibition of critical RIGI activation steps. In terms of tissue distribution, present in vascular smooth cells (at protein level).

The protein resides in the cytoplasm. Its subcellular location is the cell projection. It localises to the ruffle membrane. The protein localises to the cytoskeleton. It is found in the cell junction. The protein resides in the tight junction. The enzyme catalyses ATP + H2O = ADP + phosphate + H(+). Functionally, innate immune receptor that senses cytoplasmic viral nucleic acids and activates a downstream signaling cascade leading to the production of type I interferons and pro-inflammatory cytokines. Forms a ribonucleoprotein complex with viral RNAs on which it homooligomerizes to form filaments. The homooligomerization allows the recruitment of RNF135 an E3 ubiquitin-protein ligase that activates and amplifies the RIG-I-mediated antiviral signaling in an RNA length-dependent manner through ubiquitination-dependent and -independent mechanisms. Upon activation, associates with mitochondria antiviral signaling protein (MAVS/IPS1) that activates the IKK-related kinases TBK1 and IKBKE which in turn phosphorylate the interferon regulatory factors IRF3 and IRF7, activating transcription of antiviral immunological genes including the IFN-alpha and IFN-beta interferons. Ligands include 5'-triphosphorylated ssRNAs and dsRNAs but also short dsRNAs (&lt;1 kb in length). In addition to the 5'-triphosphate moiety, blunt-end base pairing at the 5'-end of the RNA is very essential. Overhangs at the non-triphosphorylated end of the dsRNA RNA have no major impact on its activity. A 3'overhang at the 5'triphosphate end decreases and any 5'overhang at the 5' triphosphate end abolishes its activity. Detects both positive and negative strand RNA viruses including members of the families Paramyxoviridae: Human respiratory syncytial virus and measles virus (MeV), Rhabdoviridae: vesicular stomatitis virus (VSV), Orthomyxoviridae: influenza A and B virus, Flaviviridae: Japanese encephalitis virus (JEV), hepatitis C virus (HCV), dengue virus (DENV) and west Nile virus (WNV). It also detects rotaviruses and reoviruses. Detects and binds to SARS-CoV-2 RNAs which is inhibited by m6A RNA modifications. Also involved in antiviral signaling in response to viruses containing a dsDNA genome such as Epstein-Barr virus (EBV). Detects dsRNA produced from non-self dsDNA by RNA polymerase III, such as Epstein-Barr virus-encoded RNAs (EBERs). May play important roles in granulocyte production and differentiation, bacterial phagocytosis and in the regulation of cell migration. This chain is Antiviral innate immune response receptor RIG-I, found in Homo sapiens (Human).